The chain runs to 359 residues: Glucose 1-dehydrogenase (359 aa).

Cysteine 39 provides a ligand contact to Zn(2+). Threonine 41 is a substrate binding site. Zn(2+)-binding residues include histidine 64 and glutamate 65. Substrate is bound by residues glutamate 116 and glutamate 152. Glutamate 152 contributes to the Zn(2+) binding site. 183 to 186 (AGPI) is an NADP(+) binding site.

Belongs to the zinc-containing alcohol dehydrogenase family. Glucose 1-dehydrogenase subfamily. It depends on Zn(2+) as a cofactor.

It catalyses the reaction D-glucose + NAD(+) = D-glucono-1,5-lactone + NADH + H(+). It carries out the reaction D-glucose + NADP(+) = D-glucono-1,5-lactone + NADPH + H(+). Its function is as follows. Catalyzes the NAD(P)(+)-dependent oxidation of D-glucose to D-gluconate via gluconolactone. Can utilize both NAD(+) and NADP(+) as electron acceptor. Is involved in the degradation of glucose through a non-phosphorylative variant of the Entner-Doudoroff pathway. The sequence is that of Glucose 1-dehydrogenase from Methanocella arvoryzae (strain DSM 22066 / NBRC 105507 / MRE50).